The sequence spans 383 residues: uncharacterized protein (383 aa).

Helical transmembrane passes span 49–69 (VDLLAAVQASVEPAALIGCVA) and 347–367 (LLGGIPLAGFFAAGEIGPVAG).

This sequence to M.tuberculosis Rv0874c.

Its subcellular location is the cell membrane. This is an uncharacterized protein from Mycobacterium tuberculosis (strain CDC 1551 / Oshkosh).